The chain runs to 517 residues: tRNA-2-methylthio-N(6)-dimethylallyladenosine synthase (517 aa).

The MTTase N-terminal domain maps to arginine 18–histidine 137. Residues cysteine 27, cysteine 66, cysteine 100, cysteine 174, cysteine 178, and cysteine 181 each contribute to the [4Fe-4S] cluster site. The Radical SAM core domain maps to arginine 160–glutamate 397. A TRAM domain is found at arginine 399–isoleucine 470.

Belongs to the methylthiotransferase family. MiaB subfamily. As to quaternary structure, monomer. [4Fe-4S] cluster serves as cofactor.

It localises to the cytoplasm. The enzyme catalyses N(6)-dimethylallyladenosine(37) in tRNA + (sulfur carrier)-SH + AH2 + 2 S-adenosyl-L-methionine = 2-methylsulfanyl-N(6)-dimethylallyladenosine(37) in tRNA + (sulfur carrier)-H + 5'-deoxyadenosine + L-methionine + A + S-adenosyl-L-homocysteine + 2 H(+). Functionally, catalyzes the methylthiolation of N6-(dimethylallyl)adenosine (i(6)A), leading to the formation of 2-methylthio-N6-(dimethylallyl)adenosine (ms(2)i(6)A) at position 37 in tRNAs that read codons beginning with uridine. The protein is tRNA-2-methylthio-N(6)-dimethylallyladenosine synthase of Mycobacterium leprae (strain TN).